We begin with the raw amino-acid sequence, 98 residues long: NADH-ubiquinone oxidoreductase chain 4L (98 aa).

The next 3 membrane-spanning stretches (helical) occupy residues 1-21, 29-49, and 59-79; these read MTAI…GVLV, TLLC…LLIT, and LPLT…ALLV.

Belongs to the complex I subunit 4L family. In terms of assembly, core subunit of respiratory chain NADH dehydrogenase (Complex I) which is composed of 45 different subunits.

Its subcellular location is the mitochondrion inner membrane. It catalyses the reaction a ubiquinone + NADH + 5 H(+)(in) = a ubiquinol + NAD(+) + 4 H(+)(out). Functionally, core subunit of the mitochondrial membrane respiratory chain NADH dehydrogenase (Complex I) which catalyzes electron transfer from NADH through the respiratory chain, using ubiquinone as an electron acceptor. Part of the enzyme membrane arm which is embedded in the lipid bilayer and involved in proton translocation. This is NADH-ubiquinone oxidoreductase chain 4L (MT-ND4L) from Notoryctes typhlops (Southern marsupial mole).